The chain runs to 467 residues: Methylenetetrahydrofolate--tRNA-(uracil-5-)-methyltransferase TrmFO (467 aa).

11–16 provides a ligand contact to FAD; that stretch reads GAGLAG.

This sequence belongs to the MnmG family. TrmFO subfamily. Requires FAD as cofactor.

The protein resides in the cytoplasm. The enzyme catalyses uridine(54) in tRNA + (6R)-5,10-methylene-5,6,7,8-tetrahydrofolate + NADH + H(+) = 5-methyluridine(54) in tRNA + (6S)-5,6,7,8-tetrahydrofolate + NAD(+). The catalysed reaction is uridine(54) in tRNA + (6R)-5,10-methylene-5,6,7,8-tetrahydrofolate + NADPH + H(+) = 5-methyluridine(54) in tRNA + (6S)-5,6,7,8-tetrahydrofolate + NADP(+). Catalyzes the folate-dependent formation of 5-methyl-uridine at position 54 (M-5-U54) in all tRNAs. The protein is Methylenetetrahydrofolate--tRNA-(uracil-5-)-methyltransferase TrmFO of Prochlorococcus marinus (strain NATL1A).